The primary structure comprises 168 residues: Mesencephalic astrocyte-derived neurotrophic factor homolog (168 aa).

Positions 1 to 17 (MSRLVLLISLVIVVASA) are cleaved as a signal peptide. 4 cysteine pairs are disulfide-bonded: Cys-22–Cys-109, Cys-25–Cys-97, Cys-55–Cys-66, and Cys-143–Cys-146.

The protein belongs to the ARMET family. Expressed in the intestine, spermatheca and nervous system. Expressed in the hypoderm. Expressed in structures of the excretory system. Not expressed in the male gonad.

The protein localises to the secreted. The protein resides in the endoplasmic reticulum lumen. Its function is as follows. Inhibits endoplasmic reticulum (ER) stress response. Retained in the ER under normal conditions and is up-regulated and secreted by the ER in response to ER stress and hypoxia. Following secretion by the ER, directly binds to 3-O-sulfogalactosylceramide, a lipid sulfatide in the outer cell membrane of target cells. Sulfatide binding promotes its cellular uptake by endocytosis, and is required for its role in alleviating ER stress under ER stress conditions. Has a neuroprotective role, ensuring survival of dopaminergic neurons during normal growth. In Caenorhabditis elegans, this protein is Mesencephalic astrocyte-derived neurotrophic factor homolog.